The following is a 694-amino-acid chain: Elongation factor G (694 aa).

The tr-type G domain maps to 8–287 (EDYRNFGIMA…AVISYLPSPV (280 aa)). GTP is bound by residues 17-24 (AHIDAGKT), 86-90 (DTPGH), and 140-143 (NKMD).

Belongs to the TRAFAC class translation factor GTPase superfamily. Classic translation factor GTPase family. EF-G/EF-2 subfamily.

It localises to the cytoplasm. Catalyzes the GTP-dependent ribosomal translocation step during translation elongation. During this step, the ribosome changes from the pre-translocational (PRE) to the post-translocational (POST) state as the newly formed A-site-bound peptidyl-tRNA and P-site-bound deacylated tRNA move to the P and E sites, respectively. Catalyzes the coordinated movement of the two tRNA molecules, the mRNA and conformational changes in the ribosome. This is Elongation factor G from Bartonella quintana (strain Toulouse) (Rochalimaea quintana).